Here is a 509-residue protein sequence, read N- to C-terminus: Thymus-specific serine protease (509 aa).

The first 22 residues, 1–22 (MAVKAPWLGFLLLVSLWGLSTP), serve as a signal peptide directing secretion. Residues N69 and N171 are each glycosylated (N-linked (GlcNAc...) asparagine). S184 acts as the Charge relay system in catalysis. A glycan (N-linked (GlcNAc...) asparagine) is linked at N320. Active-site charge relay system residues include D446 and H471.

Belongs to the peptidase S28 family. In terms of tissue distribution, expressed predominantly in cortical thymic epithelial cells, with highest expression around vessels and the thymic capsule.

Its subcellular location is the cytoplasmic vesicle. In terms of biological role, protease that may play a role in T-cell development. The chain is Thymus-specific serine protease (Prss16) from Mus musculus (Mouse).